The sequence spans 268 residues: Ribosomal RNA small subunit methyltransferase A (268 aa).

Positions 16, 18, 43, 64, 89, and 110 each coordinate S-adenosyl-L-methionine.

It belongs to the class I-like SAM-binding methyltransferase superfamily. rRNA adenine N(6)-methyltransferase family. RsmA subfamily.

The protein resides in the cytoplasm. It carries out the reaction adenosine(1518)/adenosine(1519) in 16S rRNA + 4 S-adenosyl-L-methionine = N(6)-dimethyladenosine(1518)/N(6)-dimethyladenosine(1519) in 16S rRNA + 4 S-adenosyl-L-homocysteine + 4 H(+). Functionally, specifically dimethylates two adjacent adenosines (A1518 and A1519) in the loop of a conserved hairpin near the 3'-end of 16S rRNA in the 30S particle. May play a critical role in biogenesis of 30S subunits. This Pseudomonas savastanoi pv. phaseolicola (strain 1448A / Race 6) (Pseudomonas syringae pv. phaseolicola (strain 1448A / Race 6)) protein is Ribosomal RNA small subunit methyltransferase A.